Here is a 389-residue protein sequence, read N- to C-terminus: Maintenance of mitochondrial morphology protein 1-1 (389 aa).

Residues 1 to 22 (MSQFVLPAVASEGIINWPFLTG) are Lumenal-facing. The helical transmembrane segment at 23–43 (FMLGQFSVGLVLLIFVRFFIF) threads the bilayer. The Cytoplasmic portion of the chain corresponds to 44–389 (SDQTEPDINT…YRSLQTSPRR (346 aa)). Positions 83–278 (QPESLDWFSV…YPEYQQFELP (196 aa)) constitute an SMP-LTD domain. Disordered stretches follow at residues 283–345 (KTSA…PKFI) and 360–389 (FYEMQGTAGSSSGSAVADEAYRSLQTSPRR). The span at 330–341 (MSMSSQRPNINN) shows a compositional bias: polar residues.

The protein belongs to the MMM1 family. In terms of assembly, homodimer. Component of the ER-mitochondria encounter structure (ERMES) or MDM complex, composed of MMM1, MDM10, MDM12 and MDM34. An MMM1 homodimer associates with one molecule of MDM12 on each side in a pairwise head-to-tail manner, and the SMP-LTD domains of MMM1 and MDM12 generate a continuous hydrophobic tunnel for phospholipid trafficking.

Its subcellular location is the endoplasmic reticulum membrane. Functionally, component of the ERMES/MDM complex, which serves as a molecular tether to connect the endoplasmic reticulum (ER) and mitochondria. Components of this complex are involved in the control of mitochondrial shape and protein biogenesis, and function in nonvesicular lipid trafficking between the ER and mitochondria. The MDM12-MMM11 subcomplex functions in the major beta-barrel assembly pathway that is responsible for biogenesis of all outer membrane beta-barrel proteins, and acts in a late step after the SAM complex. The MDM10-MDM12-MMM1 subcomplex further acts in the TOM40-specific pathway after the action of the MDM12-MMM1 complex. Essential for establishing and maintaining the structure of mitochondria and maintenance of mtDNA nucleoids. The protein is Maintenance of mitochondrial morphology protein 1-1 of Yarrowia lipolytica (strain CLIB 122 / E 150) (Yeast).